The primary structure comprises 210 residues: N-(5'-phosphoribosyl)anthranilate isomerase (210 aa).

This sequence belongs to the TrpF family.

It carries out the reaction N-(5-phospho-beta-D-ribosyl)anthranilate = 1-(2-carboxyphenylamino)-1-deoxy-D-ribulose 5-phosphate. The protein operates within amino-acid biosynthesis; L-tryptophan biosynthesis; L-tryptophan from chorismate: step 3/5. This Staphylococcus aureus (strain bovine RF122 / ET3-1) protein is N-(5'-phosphoribosyl)anthranilate isomerase.